The following is a 437-amino-acid chain: UDP-N-acetylmuramoylalanine--D-glutamate ligase (437 aa).

115 to 121 is a binding site for ATP; it reads GSNGKST.

It belongs to the MurCDEF family.

The protein resides in the cytoplasm. It catalyses the reaction UDP-N-acetyl-alpha-D-muramoyl-L-alanine + D-glutamate + ATP = UDP-N-acetyl-alpha-D-muramoyl-L-alanyl-D-glutamate + ADP + phosphate + H(+). Its pathway is cell wall biogenesis; peptidoglycan biosynthesis. Functionally, cell wall formation. Catalyzes the addition of glutamate to the nucleotide precursor UDP-N-acetylmuramoyl-L-alanine (UMA). The sequence is that of UDP-N-acetylmuramoylalanine--D-glutamate ligase from Vibrio parahaemolyticus serotype O3:K6 (strain RIMD 2210633).